A 316-amino-acid polypeptide reads, in one-letter code: Olfactory receptor 1165 (316 aa).

The Extracellular portion of the chain corresponds to 1–28 (MMLDLGNESSVTMFILSGFSEYPHLHAP). A glycan (N-linked (GlcNAc...) asparagine) is linked at Asn-7. A helical transmembrane segment spans residues 29-50 (LFLLFFMIYTVTLIGNLGIIVV). Over 51-61 (RKVNPKLHTPM) the chain is Cytoplasmic. Residues 62-80 (YFFLSHLSFLDICYSSVFT) traverse the membrane as a helical segment. Over 81–99 (PKLLEILIVEDRTISFKGC) the chain is Extracellular. Cys-99 and Cys-181 are disulfide-bonded. Residues 100 to 122 (MTQFFLICAFVITEMFMLAVMAY) form a helical membrane-spanning segment. Residues 123–141 (DRFVAVCNPLLYTVSMSPK) lie on the Cytoplasmic side of the membrane. Residues 142–166 (LCAFLVAGTYMWGVLCSLTITYSLL) traverse the membrane as a helical segment. Residues 167-205 (QLSYCGPNIINHFGCEYSAILSLSCSDPTFSQVVCLTIS) are Extracellular-facing. The helical transmembrane segment at 206–228 (IFNETCSLLIILASYVFIVVTII) threads the bilayer. At 229–239 (KMPSKGGLQKA) the chain is on the cytoplasmic side. The helical transmembrane segment at 240 to 263 (FSTCSSHLTAISIFHGIILLLYCV) threads the bilayer. At 264–268 (PNSKN) the chain is on the extracellular side. Residues 269-291 (SWLVVKVATVLFTVMIPMLNPLI) form a helical membrane-spanning segment. Over 292 to 316 (YSLRNKDVKGTVSRLMHLKLQAHST) the chain is Cytoplasmic.

The protein belongs to the G-protein coupled receptor 1 family.

The protein localises to the cell membrane. Its function is as follows. Olfactory receptor. This Mus musculus (Mouse) protein is Olfactory receptor 1165.